The primary structure comprises 174 residues: ATP synthase subunit b (174 aa).

The helical transmembrane segment at 15 to 33 threads the bilayer; sequence NPGLVIWTLVTFSVVVFVL.

Belongs to the ATPase B chain family. As to quaternary structure, F-type ATPases have 2 components, F(1) - the catalytic core - and F(0) - the membrane proton channel. F(1) has five subunits: alpha(3), beta(3), gamma(1), delta(1), epsilon(1). F(0) has three main subunits: a(1), b(2) and c(10-14). The alpha and beta chains form an alternating ring which encloses part of the gamma chain. F(1) is attached to F(0) by a central stalk formed by the gamma and epsilon chains, while a peripheral stalk is formed by the delta and b chains.

The protein localises to the cell inner membrane. In terms of biological role, f(1)F(0) ATP synthase produces ATP from ADP in the presence of a proton or sodium gradient. F-type ATPases consist of two structural domains, F(1) containing the extramembraneous catalytic core and F(0) containing the membrane proton channel, linked together by a central stalk and a peripheral stalk. During catalysis, ATP synthesis in the catalytic domain of F(1) is coupled via a rotary mechanism of the central stalk subunits to proton translocation. Functionally, component of the F(0) channel, it forms part of the peripheral stalk, linking F(1) to F(0). This is ATP synthase subunit b from Leptospira biflexa serovar Patoc (strain Patoc 1 / Ames).